We begin with the raw amino-acid sequence, 532 residues long: 3-hydroxy-3-methylglutaryl-coenzyme A reductase 1 (532 aa).

The chain crosses the membrane as a helical span at residues 63–83 (FATVVYLVSLFAHPDAPATTT). The linker stretch occupies residues 77–117 (DAPATTTGDDDDGQGGSRRARPAAAEPAPMHGHGGGMMEAD). The interval 78-111 (APATTTGDDDDGQGGSRRARPAAAEPAPMHGHGG) is disordered. Over residues 98–107 (PAAAEPAPMH) the composition is skewed to low complexity. Positions 118–532 (DEEIVAAVAS…SSKDVAKAAS (415 aa)) are catalytic. Catalysis depends on Glu-211, which acts as the Charge relay system. Residue Asn-275 is glycosylated (N-linked (GlcNAc...) asparagine). Catalysis depends on charge relay system residues Lys-343 and Asp-419. His-517 functions as the Proton donor in the catalytic mechanism. Residue Asn-521 is glycosylated (N-linked (GlcNAc...) asparagine).

The protein belongs to the HMG-CoA reductase family.

It is found in the endoplasmic reticulum membrane. It catalyses the reaction (R)-mevalonate + 2 NADP(+) + CoA = (3S)-3-hydroxy-3-methylglutaryl-CoA + 2 NADPH + 2 H(+). Its pathway is metabolic intermediate biosynthesis; (R)-mevalonate biosynthesis; (R)-mevalonate from acetyl-CoA: step 3/3. Its function is as follows. Catalyzes the synthesis of mevalonate. The specific precursor of all isoprenoid compounds present in plants. The sequence is that of 3-hydroxy-3-methylglutaryl-coenzyme A reductase 1 (HMG1) from Oryza sativa subsp. japonica (Rice).